Here is a 133-residue protein sequence, read N- to C-terminus: Small ribosomal subunit protein uS8 (133 aa).

It belongs to the universal ribosomal protein uS8 family. As to quaternary structure, part of the 30S ribosomal subunit.

In terms of biological role, one of the primary rRNA binding proteins, it binds directly to 16S rRNA central domain where it helps coordinate assembly of the platform of the 30S subunit. In Saccharolobus islandicus (strain L.S.2.15 / Lassen #1) (Sulfolobus islandicus), this protein is Small ribosomal subunit protein uS8.